A 700-amino-acid polypeptide reads, in one-letter code: Polyphosphate kinase (700 aa).

Asn45 lines the ATP pocket. Mg(2+) is bound by residues Arg373 and Arg403. In terms of domain architecture, PLD phosphodiesterase 1 spans 428-462 (PGMKIHAKLLLITRREEQGFVRYAHIGTGNFHERT). His433 acts as the Phosphohistidine intermediate in catalysis. Positions 466, 562, and 590 each coordinate ATP. The PLD phosphodiesterase 2 domain occupies 585-615 (DRFLEHPRVLVVHNDGDPQVFISSADWMERN).

This sequence belongs to the polyphosphate kinase 1 (PPK1) family. It depends on Mg(2+) as a cofactor. In terms of processing, an intermediate of this reaction is the autophosphorylated ppk in which a phosphate is covalently linked to a histidine residue through a N-P bond.

The catalysed reaction is [phosphate](n) + ATP = [phosphate](n+1) + ADP. In terms of biological role, catalyzes the reversible transfer of the terminal phosphate of ATP to form a long-chain polyphosphate (polyP). The polypeptide is Polyphosphate kinase (Vibrio vulnificus (strain YJ016)).